The following is a 959-amino-acid chain: Translation initiation factor IF-2 (959 aa).

Residues 1–10 (MSDKTNDDKT) show a composition bias toward basic and acidic residues. Residues 1–374 (MSDKTNDDKT…SQMQETREKI (374 aa)) are disordered. The segment covering 27 to 37 (EQSTVRQNFSH) has biased composition (polar residues). Low complexity-rich tracts occupy residues 63-118 (AAAA…VTKP) and 128-138 (QRPGGQQAQRP). Basic and acidic residues-rich tracts occupy residues 154-225 (SEMD…EAAK) and 232-241 (ARSERRDDAR). A compositionally biased stretch (low complexity) spans 246–284 (GARPQQAGRPQGGRPQPAGRPQQGSPRPAPIIADAAPIA). Residues 318–333 (PEVRAPKVVKGEDDRR) are compositionally biased toward basic and acidic residues. Residues 457–626 (SRPPVVTIMG…LLQAEMLDLK (170 aa)) enclose the tr-type G domain. The segment at 466–473 (GHVDHGKT) is G1. Position 466–473 (466–473 (GHVDHGKT)) interacts with GTP. Positions 491-495 (GITQH) are G2. Positions 512 to 515 (DTPG) are G3. GTP contacts are provided by residues 512–516 (DTPGH) and 566–569 (NKID). The tract at residues 566 to 569 (NKID) is G4. Residues 602–604 (SAK) form a G5 region.

Belongs to the TRAFAC class translation factor GTPase superfamily. Classic translation factor GTPase family. IF-2 subfamily.

The protein localises to the cytoplasm. One of the essential components for the initiation of protein synthesis. Protects formylmethionyl-tRNA from spontaneous hydrolysis and promotes its binding to the 30S ribosomal subunits. Also involved in the hydrolysis of GTP during the formation of the 70S ribosomal complex. In Brucella canis (strain ATCC 23365 / NCTC 10854 / RM-666), this protein is Translation initiation factor IF-2.